Reading from the N-terminus, the 439-residue chain is Tol-Pal system protein TolB (439 aa).

Positions 1–22 (MTKFPRWLAMLVGLLFPLSALT) are cleaved as a signal peptide.

It belongs to the TolB family. As to quaternary structure, the Tol-Pal system is composed of five core proteins: the inner membrane proteins TolA, TolQ and TolR, the periplasmic protein TolB and the outer membrane protein Pal. They form a network linking the inner and outer membranes and the peptidoglycan layer.

The protein resides in the periplasm. In terms of biological role, part of the Tol-Pal system, which plays a role in outer membrane invagination during cell division and is important for maintaining outer membrane integrity. This Xylella fastidiosa (strain 9a5c) protein is Tol-Pal system protein TolB.